A 140-amino-acid chain; its full sequence is Mitochondrial import receptor subunit TOM22 homolog (140 aa).

Low complexity predominate over residues 1 to 11; sequence MAAAAAGPGAP. The disordered stretch occupies residues 1–40; sequence MAAAAAGPGAPLSADELLPKGDAEKPEEELEEEDDEELDE. Topologically, residues 1–81 are cytoplasmic; the sequence is MAAAAAGPGA…AQKMYRFSRA (81 aa). At Ser-13 the chain carries Phosphoserine. Acidic residues predominate over residues 25 to 40; that stretch reads KPEEELEEEDDEELDE. The tract at residues 39–48 is import sequence; necessary for mitochondrion outer membrane localization and integration in the TOM complex; that stretch reads DETLSERLWG. Thr-41 bears the Phosphothreonine mark. Ser-43 bears the Phosphoserine mark. Positions 81 to 101 are TMD; necessary for mitochondrion outer membrane localization and integration in the TOM complex; it reads AALWIGTTSFMILVLPVVFET. The chain crosses the membrane as a helical span at residues 82–101; sequence ALWIGTTSFMILVLPVVFET. Residues 102–140 lie on the Mitochondrial intermembrane side of the membrane; sequence EKLQMEQQQQLQQRQILLGPNTGLSGGMPGALPSLPGKI. Residues 121 to 140 are C-tail signal; necessary for mitochondrion outer membrane localization and integration in the TOM complex; that stretch reads PNTGLSGGMPGALPSLPGKI.

Belongs to the Tom22 family. Forms part of the preprotein translocase complex of the outer mitochondrial membrane (TOM complex) which consists of at least 7 different proteins (TOMM5, TOMM6, TOMM7, TOMM20, TOMM22, TOMM40 and TOMM70). Interacts with PPP2R2B and TOMM40.

The protein resides in the mitochondrion outer membrane. Its function is as follows. Central receptor component of the translocase of the outer membrane of mitochondria (TOM complex) responsible for the recognition and translocation of cytosolically synthesized mitochondrial preproteins. Together with the peripheral receptor TOM20 functions as the transit peptide receptor and facilitates the movement of preproteins into the translocation pore. Required for the translocation across the mitochondrial outer membrane of cytochrome P450 monooxygenases. This Bos taurus (Bovine) protein is Mitochondrial import receptor subunit TOM22 homolog (TOMM22).